The following is a 1107-amino-acid chain: DNA-directed RNA polymerase subunit beta (1107 aa).

Residues 1062–1075 (DNEGNEKEKARELG) are compositionally biased toward basic and acidic residues. A disordered region spans residues 1062–1081 (DNEGNEKEKARELGLDLPDN).

The protein belongs to the RNA polymerase beta chain family. In terms of assembly, the RNAP catalytic core consists of 2 alpha, 1 beta, 1 beta' and 1 omega subunit. When a sigma factor is associated with the core the holoenzyme is formed, which can initiate transcription.

The catalysed reaction is RNA(n) + a ribonucleoside 5'-triphosphate = RNA(n+1) + diphosphate. DNA-dependent RNA polymerase catalyzes the transcription of DNA into RNA using the four ribonucleoside triphosphates as substrates. The polypeptide is DNA-directed RNA polymerase subunit beta (Syntrophomonas wolfei subsp. wolfei (strain DSM 2245B / Goettingen)).